Reading from the N-terminus, the 411-residue chain is MATINDHYLKLKAGYLFPEIARRVNAFAAAQPDAQIIRLGIGDVTEPLPAACRTAMIKAVEDMGDRSSFRGYGPEQGYEWLRQSIAEHDFQRRGCEIDASEIFVSDGSKCDTGNILDIFGDNNTIAVTDPVYPVYVDTNVMAGHTGAANEQGEYAGLVYLPVTAENGFTASLPEQKVDLIYLCFPNNPTGATASRAHLQQWVDYARANGSIIFFDAAYEAFITDPDLPHSIYEIPGARSCAIEFRSFSKNAGFTGTRCALTVVPKTLTAKAADGSEVEIWKLWNRRQSTKFNGVSYIVQRGAEAVYSPEGQAEVKGLVSFYLENARIIREQLSANGLAVYGGVNAPYVWVKTPSGFSSWEFFDKLLHTCHVVVTPGSGFGAAGEGYFRVSAFNSRANVEMAMQRIREKLAT.

Residues Y15 and G42 each coordinate substrate. Pyridoxal 5'-phosphate is bound by residues Y72, 108 to 109 (SK), Y132, N187, Y218, and 246 to 248 (SFS). Residues K109, Y132, and N187 each coordinate substrate. The residue at position 249 (K249) is an N6-(pyridoxal phosphate)lysine. R257 and N292 together coordinate pyridoxal 5'-phosphate. Positions 292 and 388 each coordinate substrate.

Belongs to the class-I pyridoxal-phosphate-dependent aminotransferase family. LL-diaminopimelate aminotransferase subfamily. In terms of assembly, homodimer. Pyridoxal 5'-phosphate is required as a cofactor.

It carries out the reaction (2S,6S)-2,6-diaminopimelate + 2-oxoglutarate = (S)-2,3,4,5-tetrahydrodipicolinate + L-glutamate + H2O + H(+). It functions in the pathway amino-acid biosynthesis; L-lysine biosynthesis via DAP pathway; LL-2,6-diaminopimelate from (S)-tetrahydrodipicolinate (aminotransferase route): step 1/1. Functionally, involved in the synthesis of meso-diaminopimelate (m-DAP or DL-DAP), required for both lysine and peptidoglycan biosynthesis. Catalyzes the direct conversion of tetrahydrodipicolinate to LL-diaminopimelate. The protein is LL-diaminopimelate aminotransferase of Cyanothece sp. (strain PCC 7425 / ATCC 29141).